Here is a 258-residue protein sequence, read N- to C-terminus: Octanoyltransferase (258 aa).

The BPL/LPL catalytic domain occupies 42–226; it reads NVGTDTLLLL…AVVAALDGEL (185 aa). Substrate contacts are provided by residues 80 to 87, 156 to 158, and 169 to 171; these read RGGKITWH, AIG, and GFS. Cysteine 187 acts as the Acyl-thioester intermediate in catalysis.

This sequence belongs to the LipB family.

It is found in the cytoplasm. It catalyses the reaction octanoyl-[ACP] + L-lysyl-[protein] = N(6)-octanoyl-L-lysyl-[protein] + holo-[ACP] + H(+). It functions in the pathway protein modification; protein lipoylation via endogenous pathway; protein N(6)-(lipoyl)lysine from octanoyl-[acyl-carrier-protein]: step 1/2. Its function is as follows. Catalyzes the transfer of endogenously produced octanoic acid from octanoyl-acyl-carrier-protein onto the lipoyl domains of lipoate-dependent enzymes. Lipoyl-ACP can also act as a substrate although octanoyl-ACP is likely to be the physiological substrate. This Rhodococcus jostii (strain RHA1) protein is Octanoyltransferase.